The chain runs to 172 residues: C-phycocyanin beta chain (172 aa).

(2R,3E)-phycocyanobilin contacts are provided by residues Asn-35, Asp-39, Asn-72, Arg-77, Cys-82, 82–88 (CLRDMEI), 149–151 (TIG), and Cys-153. At Asn-72 the chain carries N4-methylasparagine.

Belongs to the phycobiliprotein family. As to quaternary structure, heterodimer of an alpha and a beta subunit, which further assembles into trimers and the trimers into hexamers. The basic functional unit of phycobiliproteins is a ring-shaped hexamer formed from two back-to-back trimers contacting via the alpha chain subunits. The trimers are composed of alpha/beta subunit heterodimers arranged around a three-fold axis of symmetry. The phycoerythrins also contain a gamma subunit which is located in the center of the hexamer. Contains two covalently linked phycocyanobilin chromophores.

It is found in the plastid. Its subcellular location is the chloroplast thylakoid membrane. In terms of biological role, light-harvesting photosynthetic tetrapyrrole chromophore-protein from the phycobiliprotein complex (phycobilisome, PBS). Phycocyanin is the major phycobiliprotein in the PBS rod. This chain is C-phycocyanin beta chain (cpcB), found in Cyanidium caldarium (Red alga).